The chain runs to 68 residues: UPF0434 protein H16_A0605 (68 aa).

The protein belongs to the UPF0434 family.

This Cupriavidus necator (strain ATCC 17699 / DSM 428 / KCTC 22496 / NCIMB 10442 / H16 / Stanier 337) (Ralstonia eutropha) protein is UPF0434 protein H16_A0605.